Here is a 625-residue protein sequence, read N- to C-terminus: MKFDVIVIGGGHAGIEAALASARMGMKTLMITILAEQIGAASCNPAIGGLAKGHLVKEIDALGGQMGLTTDKTGIQFRILNASKGPAVRGSRAQIDMDRYRIMMRTIVLNTPNLEVRQEMVDRLLIKGDAVVGVETNLKNVYHAKKVIVTTGTFLRGLIHIGEIKQEAGRAGEFASNALSDSLKSLGLRLGRLKTGTCARIDAKTIDFSRMEVQPGDENPIPFSFRTDRKRFNPTQLPCYITYTNERTHEIIESNFHRAPLFTGQIEGVGPRYCPSIEDKIYRFRDKERHHIFVEPQTLEATEYYINGMSTSLPPDVQLEMIRSVKGLEHAEVVRYGYAIEYDFVDPTQLKHTLETKSIKNLYCAGQINGTTGYEEAAAQGLMAGINAALAIKEQEPLILGRDEAYIGVLIDDLVTKGTKEPYRMFTSRAEFRLLLREDNADLRLMPYGHKLGLVDEETYMKMIRKKEQIEKGLDLLKNSFITPNKETLELLSSLEEGKITDKTALVNVVARPTFTMEKLEVLVPEIQEFSEEAKEQILIEAKYHQYIQMQKEQIEKMHELMNVKIPEDLDIDAISGLSNEVKEKLKAHKPPTLFAASQISGITPAAIEILHIYIKMHQKRRVTK.

FAD contacts are provided by residues 9–14 (GGGHAG), Val-121, and Ser-176. 270 to 284 (GPRYCPSIEDKIYRF) is a binding site for NAD(+). Gln-367 serves as a coordination point for FAD.

Belongs to the MnmG family. As to quaternary structure, homodimer. Heterotetramer of two MnmE and two MnmG subunits. Requires FAD as cofactor.

It localises to the cytoplasm. In terms of biological role, NAD-binding protein involved in the addition of a carboxymethylaminomethyl (cmnm) group at the wobble position (U34) of certain tRNAs, forming tRNA-cmnm(5)s(2)U34. This is tRNA uridine 5-carboxymethylaminomethyl modification enzyme MnmG from Nitratiruptor sp. (strain SB155-2).